The sequence spans 477 residues: PTS system glucose-specific EIICB component (477 aa).

The 388-residue stretch at 1-388 folds into the PTS EIIC type-1 domain; it reads MFKNVFSSLQ…FNLKTPGREE (388 aa). The next 9 membrane-spanning stretches (helical) occupy residues 20–40, 51–71, 76–96, 112–132, 152–172, 250–270, 280–300, 304–324, and 354–374; these read VSVL…FTLI, TGGS…ALGF, GVAA…LSAV, NFSD…AYMF, FVPI…SLIW, LSGG…AIWH, IGSI…TEPI, FILV…LSFP, and IFLF…IFYF. Residues 399–477 form the PTS EIIB type-1 domain; it reads IEIAPYIVEA…TAIDEYINNI (79 aa). Cys-421 functions as the Phosphocysteine intermediate; for EIIB activity in the catalytic mechanism. Phosphocysteine is present on Cys-421.

The protein localises to the cell inner membrane. The catalysed reaction is N(pros)-phospho-L-histidyl-[protein] + D-glucose(out) = D-glucose 6-phosphate(in) + L-histidyl-[protein]. The phosphoenolpyruvate-dependent sugar phosphotransferase system (sugar PTS), a major carbohydrate active transport system, catalyzes the phosphorylation of incoming sugar substrates concomitantly with their translocation across the cell membrane. The enzyme II complex composed of PtsG and Crr is involved in glucose transport. The polypeptide is PTS system glucose-specific EIICB component (ptsG) (Buchnera aphidicola subsp. Schizaphis graminum (strain Sg)).